The sequence spans 247 residues: 1-(5-phosphoribosyl)-5-[(5-phosphoribosylamino)methylideneamino] imidazole-4-carboxamide isomerase (247 aa).

Aspartate 8 acts as the Proton acceptor in catalysis. Aspartate 129 (proton donor) is an active-site residue.

It belongs to the HisA/HisF family.

Its subcellular location is the cytoplasm. The enzyme catalyses 1-(5-phospho-beta-D-ribosyl)-5-[(5-phospho-beta-D-ribosylamino)methylideneamino]imidazole-4-carboxamide = 5-[(5-phospho-1-deoxy-D-ribulos-1-ylimino)methylamino]-1-(5-phospho-beta-D-ribosyl)imidazole-4-carboxamide. It participates in amino-acid biosynthesis; L-histidine biosynthesis; L-histidine from 5-phospho-alpha-D-ribose 1-diphosphate: step 4/9. The polypeptide is 1-(5-phosphoribosyl)-5-[(5-phosphoribosylamino)methylideneamino] imidazole-4-carboxamide isomerase (Solidesulfovibrio magneticus (strain ATCC 700980 / DSM 13731 / RS-1) (Desulfovibrio magneticus)).